The sequence spans 1165 residues: Symplekin (1165 aa).

HEAT repeat units lie at residues Thr-23–Gly-58, Ala-61–Lys-95, Val-98–Ser-140, Ser-147–Val-186, and Lys-218–Met-257. Residues Asp-365–Lys-384 are disordered. Residues Gln-367 to Lys-384 are compositionally biased toward basic and acidic residues.

The protein belongs to the Symplekin family. As to quaternary structure, interacts with Cpsf73 and Cpsf100 forming a core cleavage factor required for both polyadenylated and histone mRNA processing. Interacts with Slbp and Lsm11.

The protein localises to the nucleus. In terms of biological role, component of a protein complex required for cotranscriptional processing of 3'-ends of polyadenylated and histone pre-mRNA. Involved in germline stem cell transit amplification, differentiation and mitosis-to-meiosis transition. In Drosophila melanogaster (Fruit fly), this protein is Symplekin.